The primary structure comprises 407 residues: Phosphonoacetate hydrolase (407 aa).

Asp25, Thr64, Asp202, His206, Asp241, His242, and His368 together coordinate Zn(2+). Substrate is bound by residues Thr64 and Asp202. Residues His242 and His368 each coordinate substrate.

The protein belongs to the alkaline phosphatase family. PhnA subfamily. As to quaternary structure, homodimer. Zn(2+) is required as a cofactor.

It catalyses the reaction phosphonoacetate + H2O = acetate + phosphate + H(+). In terms of biological role, specifically hydrolyzes phosphonoacetate. Does not have activity on other organophosphonates or acetates. This is Phosphonoacetate hydrolase from Pseudomonas putida (Arthrobacter siderocapsulatus).